Reading from the N-terminus, the 170-residue chain is Peptide deformylase (170 aa).

Fe cation-binding residues include Cys-94 and His-136. Glu-137 is a catalytic residue. Position 140 (His-140) interacts with Fe cation.

Belongs to the polypeptide deformylase family. Fe(2+) serves as cofactor.

It catalyses the reaction N-terminal N-formyl-L-methionyl-[peptide] + H2O = N-terminal L-methionyl-[peptide] + formate. Functionally, removes the formyl group from the N-terminal Met of newly synthesized proteins. Requires at least a dipeptide for an efficient rate of reaction. N-terminal L-methionine is a prerequisite for activity but the enzyme has broad specificity at other positions. The polypeptide is Peptide deformylase (Stenotrophomonas maltophilia (strain K279a)).